Consider the following 341-residue polypeptide: Protein DOWNY MILDEW RESISTANCE 6 (341 aa).

In terms of domain architecture, Fe2OG dioxygenase spans 188–288; it reads QGQHMAVNYY…RLSVASFLCP (101 aa). Positions 212, 214, and 269 each coordinate Fe cation. Arg279 contributes to the 2-oxoglutarate binding site.

Belongs to the iron/ascorbate-dependent oxidoreductase family. The cofactor is Fe(2+).

It carries out the reaction salicylate + NADH + O2 + H(+) = 2,3-dihydroxybenzoate + NAD(+) + H2O. Its function is as follows. Converts salicylic acid (SA) to 2,3-dihydroxybenzoic acid (2,3-DHBA). Suppressor of immunity. Regulates negatively defense associated genes expression (e.g. PR-1, PR-2, and PR-5). Negative regulator of defense against Hyaloperonospora arabidopsidis. (Microbial infection) Required for susceptibility to the downy mildew pathogen Hyaloperonospora arabidopsidis. In terms of biological role, (Microbial infection) Required for susceptibility to Pseudomonas syringae pv. tomato DC3000. Functionally, (Microbial infection) Required for susceptibility to the oomycete Phytophthora capsici. The sequence is that of Protein DOWNY MILDEW RESISTANCE 6 from Arabidopsis thaliana (Mouse-ear cress).